A 90-amino-acid chain; its full sequence is Probable Fe(2+)-trafficking protein (90 aa).

This sequence belongs to the Fe(2+)-trafficking protein family.

In terms of biological role, could be a mediator in iron transactions between iron acquisition and iron-requiring processes, such as synthesis and/or repair of Fe-S clusters in biosynthetic enzymes. This Coxiella burnetii (strain CbuK_Q154) (Coxiella burnetii (strain Q154)) protein is Probable Fe(2+)-trafficking protein.